The primary structure comprises 158 residues: UPF0262 protein Rsph17025_0594 (158 aa).

It belongs to the UPF0262 family.

The polypeptide is UPF0262 protein Rsph17025_0594 (Cereibacter sphaeroides (strain ATCC 17025 / ATH 2.4.3) (Rhodobacter sphaeroides)).